We begin with the raw amino-acid sequence, 198 residues long: Probable GTP-binding protein EngB (198 aa).

In terms of domain architecture, EngB-type G spans 22-197 (TLPEYAFIGR…LDYIEGINNS (176 aa)). Residues 30–37 (GRSNVGKS), 57–61 (GKTQL), 75–78 (DLPG), 142–145 (TKAD), and 175–178 (ITSA) each bind GTP. 2 residues coordinate Mg(2+): serine 37 and threonine 59.

Belongs to the TRAFAC class TrmE-Era-EngA-EngB-Septin-like GTPase superfamily. EngB GTPase family. Requires Mg(2+) as cofactor.

Necessary for normal cell division and for the maintenance of normal septation. This chain is Probable GTP-binding protein EngB, found in Christiangramia forsetii (strain DSM 17595 / CGMCC 1.15422 / KT0803) (Gramella forsetii).